The sequence spans 260 residues: Protein phosphatase 1 regulatory subunit 35 (260 aa).

The interval 1-100 is disordered; sequence MMGFGASALE…PLLVAGAPGD (100 aa). A phosphoserine mark is found at Ser-46 and Ser-53. Residues 64–76 show a composition bias toward basic residues; that stretch reads RKGRRGGSRRGRQ.

The protein belongs to the PPP1R35 family. In terms of assembly, interacts with PPP1CA; this interaction mediates the PPP1CA phosphatase activity inhibition. Interacts with RTTN; this interaction allows the mutual recruitment to the centriole.

Its subcellular location is the cytoplasm. It localises to the cytoskeleton. The protein resides in the microtubule organizing center. It is found in the centrosome. The protein localises to the centriole. Its function is as follows. During centriole duplication, plays a role in the centriole elongation by promoting the recruitment of the microtubule-binding elongation machinery through its interaction with TTTN, leading to the centriole to centrosome conversion. In addition may play a role in the primary cilia assembly. In Mus musculus (Mouse), this protein is Protein phosphatase 1 regulatory subunit 35.